The primary structure comprises 145 residues: D-aminoacyl-tRNA deacylase (145 aa).

The short motif at 137-138 (GP) is the Gly-cisPro motif, important for rejection of L-amino acids element.

The protein belongs to the DTD family. Homodimer.

The protein resides in the cytoplasm. It catalyses the reaction glycyl-tRNA(Ala) + H2O = tRNA(Ala) + glycine + H(+). It carries out the reaction a D-aminoacyl-tRNA + H2O = a tRNA + a D-alpha-amino acid + H(+). In terms of biological role, an aminoacyl-tRNA editing enzyme that deacylates mischarged D-aminoacyl-tRNAs. Also deacylates mischarged glycyl-tRNA(Ala), protecting cells against glycine mischarging by AlaRS. Acts via tRNA-based rather than protein-based catalysis; rejects L-amino acids rather than detecting D-amino acids in the active site. By recycling D-aminoacyl-tRNA to D-amino acids and free tRNA molecules, this enzyme counteracts the toxicity associated with the formation of D-aminoacyl-tRNA entities in vivo and helps enforce protein L-homochirality. This chain is D-aminoacyl-tRNA deacylase, found in Legionella pneumophila (strain Lens).